Consider the following 791-residue polypeptide: Interleukin-17 receptor C (791 aa).

A signal peptide spans 1–20 (MPVPWFLLSLALGRSPVVLS). Topologically, residues 21–538 (LERLVGPQDA…CPMDKYIHKR (518 aa)) are extracellular. 2 N-linked (GlcNAc...) asparagine glycosylation sites follow: Asn189 and Asn257. Cys265 and Cys277 are disulfide-bonded. 4 N-linked (GlcNAc...) asparagine glycosylation sites follow: Asn284, Asn297, Asn324, and Asn334. Cystine bridges form between Cys341-Cys391, Cys343-Cys359, and Cys400-Cys409. 3 N-linked (GlcNAc...) asparagine glycosylation sites follow: Asn420, Asn443, and Asn477. Cys439 and Cys453 are oxidised to a cystine. Disulfide bonds link Cys481/Cys488 and Cys515/Cys529. A helical transmembrane segment spans residues 539-559 (WALVWLACLLFAAALSLILLL). Over 560–791 (KKDHAKGWLR…GAGPGAGDGT (232 aa)) the chain is Cytoplasmic. Residues 583–735 (GRAALLLYSA…LPSQLPDFLG (153 aa)) form the SEFIR domain. Positions 762–791 (ALDSYFHPPGTPAPGRGVGPGAGPGAGDGT) are disordered. Residues 777-791 (RGVGPGAGPGAGDGT) show a composition bias toward gly residues.

In terms of assembly, homodimer; disulfide-linked. Heterodimer with IL17RA. Heterodimerization with IL17RA is independent of the cytoplasmic tail. Associates with non-glycosylated IL17RA constitutively. Binding of IL17A and IL17F induces association with glycosylated IL17RA. Forms complexes with 2:1 binding stoichiometry: two receptor chains for one interleukin molecule. IL17A homodimer preferentially drives the formation of IL17RA-IL17RC heterodimeric receptor complex, whereas IL17F homodimer forms predominantly complexes with IL17RC homodimer. IL17A-IL17F forms complexes with IL17RA-IL17RC, but with lower affinity when compared to IL17A homodimer. IL17RC chain cannot distinguish between IL17A and IL17F molecules, potentially enabling the formation of topologically distinct complexes. Interacts (through SEFIR domain and extended downstream region) with TRAF3IP2/ACT1 (phosphorylated). In terms of tissue distribution, expressed in prostate, skeletal muscle, kidney and placenta (at protein level). Expressed in brain, cartilage, colon, heart, intestine, kidney, liver, lung, muscle, placenta, and prostate. Also detected in thyroid, trachea and adrenal gland. Low expression in thymus and leukocytes.

Its subcellular location is the cell membrane. Functionally, receptor for IL17A and IL17F, major effector cytokines of innate and adaptive immune system involved in antimicrobial host defense and maintenance of tissue integrity. Receptor for IL17A and IL17F, major effector cytokines of innate and adaptive immune system involved in antimicrobial host defense and maintenance of tissue integrity. Receptor for IL17A and IL17F homodimers as part of a heterodimeric complex with IL17RA. Receptor for the heterodimer formed by IL17A and IL17B as part of a heterodimeric complex with IL17RA. Has also been shown to be the cognate receptor for IL17F and to bind IL17A with high affinity without the need for IL17RA. Upon binding of IL17F homodimer triggers downstream activation of TRAF6 and NF-kappa-B signaling pathway. Induces transcriptional activation of IL33, a potent cytokine that stimulates group 2 innate lymphoid cells and adaptive T-helper 2 cells involved in pulmonary allergic response to fungi. Promotes sympathetic innervation of peripheral organs by coordinating the communication between gamma-delta T cells and parenchymal cells. Stimulates sympathetic innervation of thermogenic adipose tissue by driving TGFB1 expression. Binding of IL17A-IL17F to IL17RA-IL17RC heterodimeric receptor complex triggers homotypic interaction of IL17RA and IL17RC chains with TRAF3IP2 adapter through SEFIR domains. This leads to downstream TRAF6-mediated activation of NF-kappa-B and MAPkinase pathways ultimately resulting in transcriptional activation of cytokines, chemokines, antimicrobial peptides and matrix metalloproteinases, with potential strong immune inflammation. Primarily induces neutrophil activation and recruitment at infection and inflammatory sites. Stimulates the production of antimicrobial beta-defensins DEFB1, DEFB103A, and DEFB104A by mucosal epithelial cells, limiting the entry of microbes through the epithelial barriers. In terms of biological role, receptor for both IL17A and IL17F. Its function is as follows. Does not bind IL17A or IL17F. The polypeptide is Interleukin-17 receptor C (IL17RC) (Homo sapiens (Human)).